Consider the following 311-residue polypeptide: Malate dehydrogenase (311 aa).

NAD(+)-binding positions include 7–13 (GAAGGIG) and aspartate 34. 2 residues coordinate substrate: arginine 81 and arginine 87. NAD(+) contacts are provided by residues asparagine 94 and 117-119 (ITN). Asparagine 119 and arginine 153 together coordinate substrate. Histidine 177 (proton acceptor) is an active-site residue. Methionine 227 lines the NAD(+) pocket.

It belongs to the LDH/MDH superfamily. MDH type 1 family. Homodimer.

The catalysed reaction is (S)-malate + NAD(+) = oxaloacetate + NADH + H(+). In terms of biological role, catalyzes the reversible oxidation of malate to oxaloacetate. The sequence is that of Malate dehydrogenase from Shewanella putrefaciens (strain CN-32 / ATCC BAA-453).